The sequence spans 214 residues: tRNA (guanine-N(7)-)-methyltransferase (214 aa).

4 residues coordinate S-adenosyl-L-methionine: Glu44, Glu69, Asp96, and Asp118. Asp118 is a catalytic residue. Residues Lys122, Asp154, and 191-194 (TEYE) each bind substrate.

It belongs to the class I-like SAM-binding methyltransferase superfamily. TrmB family.

The catalysed reaction is guanosine(46) in tRNA + S-adenosyl-L-methionine = N(7)-methylguanosine(46) in tRNA + S-adenosyl-L-homocysteine. It functions in the pathway tRNA modification; N(7)-methylguanine-tRNA biosynthesis. Functionally, catalyzes the formation of N(7)-methylguanine at position 46 (m7G46) in tRNA. The polypeptide is tRNA (guanine-N(7)-)-methyltransferase (Listeria monocytogenes serotype 4b (strain F2365)).